The chain runs to 341 residues: 3-dehydroquinate synthase (341 aa).

NAD(+) contacts are provided by residues 54–59, 88–92, 112–113, Lys125, Lys133, and 151–154; these read DGEKYK, GVVTD, TT, and TLST. Residues Glu166, His220, and His236 each coordinate Zn(2+).

Belongs to the sugar phosphate cyclases superfamily. Dehydroquinate synthase family. The cofactor is NAD(+). It depends on Co(2+) as a cofactor. Zn(2+) serves as cofactor.

The protein localises to the cytoplasm. It carries out the reaction 7-phospho-2-dehydro-3-deoxy-D-arabino-heptonate = 3-dehydroquinate + phosphate. Its pathway is metabolic intermediate biosynthesis; chorismate biosynthesis; chorismate from D-erythrose 4-phosphate and phosphoenolpyruvate: step 2/7. Its function is as follows. Catalyzes the conversion of 3-deoxy-D-arabino-heptulosonate 7-phosphate (DAHP) to dehydroquinate (DHQ). The chain is 3-dehydroquinate synthase from Thermococcus kodakarensis (strain ATCC BAA-918 / JCM 12380 / KOD1) (Pyrococcus kodakaraensis (strain KOD1)).